The primary structure comprises 473 residues: Ribulose bisphosphate carboxylase large chain (473 aa).

Substrate-binding residues include N116 and T166. K168 (proton acceptor) is an active-site residue. K170 is a substrate binding site. Residues K194, D196, and E197 each coordinate Mg(2+). K194 is subject to N6-carboxylysine. H287 (proton acceptor) is an active-site residue. Substrate is bound by residues R288, H320, and S372.

Belongs to the RuBisCO large chain family. Type I subfamily. As to quaternary structure, heterohexadecamer of 8 large chains and 8 small chains. It depends on Mg(2+) as a cofactor.

It carries out the reaction 2 (2R)-3-phosphoglycerate + 2 H(+) = D-ribulose 1,5-bisphosphate + CO2 + H2O. It catalyses the reaction D-ribulose 1,5-bisphosphate + O2 = 2-phosphoglycolate + (2R)-3-phosphoglycerate + 2 H(+). Its function is as follows. RuBisCO catalyzes two reactions: the carboxylation of D-ribulose 1,5-bisphosphate, the primary event in carbon dioxide fixation, as well as the oxidative fragmentation of the pentose substrate. Both reactions occur simultaneously and in competition at the same active site. The polypeptide is Ribulose bisphosphate carboxylase large chain (Rhodobacter capsulatus (strain ATCC BAA-309 / NBRC 16581 / SB1003)).